The chain runs to 312 residues: Olfactory receptor 4K17 (312 aa).

Residues methionine 1 to phenylalanine 25 lie on the Extracellular side of the membrane. N-linked (GlcNAc...) asparagine glycosylation occurs at asparagine 5. Residues leucine 26–valine 49 traverse the membrane as a helical segment. Residues phenylalanine 50–threonine 57 lie on the Cytoplasmic side of the membrane. A helical membrane pass occupies residues proline 58–proline 79. Residues lysine 80–glutamine 100 lie on the Extracellular side of the membrane. The cysteines at positions 97 and 189 are disulfide-linked. The chain crosses the membrane as a helical span at residues isoleucine 101–phenylalanine 120. Topologically, residues aspartate 121 to lysine 139 are cytoplasmic. The chain crosses the membrane as a helical span at residues valine 140 to phenylalanine 158. Residues glutamine 159–valine 195 lie on the Extracellular side of the membrane. The chain crosses the membrane as a helical span at residues glutamine 196–serine 219. Residues leucine 220 to lysine 235 are Cytoplasmic-facing. A helical membrane pass occupies residues alanine 236–tyrosine 258. Over isoleucine 259–lysine 269 the chain is Extracellular. Asparagine 264 is a glycosylation site (N-linked (GlcNAc...) asparagine). Residues phenylalanine 270 to leucine 289 traverse the membrane as a helical segment. At arginine 290–threonine 312 the chain is on the cytoplasmic side.

This sequence belongs to the G-protein coupled receptor 1 family.

It is found in the cell membrane. Odorant receptor. The polypeptide is Olfactory receptor 4K17 (OR4K17) (Homo sapiens (Human)).